The sequence spans 365 residues: Alanine racemase (365 aa).

Lys32 serves as the catalytic Proton acceptor; specific for D-alanine. Residue Lys32 is modified to N6-(pyridoxal phosphate)lysine. Arg128 is a substrate binding site. Residue Tyr257 is the Proton acceptor; specific for L-alanine of the active site. Residue Met305 coordinates substrate.

This sequence belongs to the alanine racemase family. The cofactor is pyridoxal 5'-phosphate.

It carries out the reaction L-alanine = D-alanine. It participates in amino-acid biosynthesis; D-alanine biosynthesis; D-alanine from L-alanine: step 1/1. In terms of biological role, catalyzes the interconversion of L-alanine and D-alanine. May also act on other amino acids. The protein is Alanine racemase (alr) of Francisella tularensis subsp. tularensis (strain SCHU S4 / Schu 4).